The primary structure comprises 222 residues: Small ribosomal subunit protein uS7m (222 aa).

The transit peptide at Met1–Ile14 directs the protein to the mitochondrion.

This sequence belongs to the universal ribosomal protein uS7 family. As to quaternary structure, component of the mitochondrial ribosome small subunit (28S) which comprises a 12S rRNA and about 30 distinct proteins.

The protein localises to the mitochondrion. This is Small ribosomal subunit protein uS7m (mrps-7) from Caenorhabditis elegans.